The sequence spans 183 residues: Dual-action ribosomal maturation protein DarP (183 aa).

The tract at residues 1 to 27 is disordered; that stretch reads MSSHSQEPVGEENFDDSEYDRPSKSQV. Residues 9–18 show a composition bias toward acidic residues; the sequence is VGEENFDDSE.

This sequence belongs to the DarP family.

It is found in the cytoplasm. In terms of biological role, member of a network of 50S ribosomal subunit biogenesis factors which assembles along the 30S-50S interface, preventing incorrect 23S rRNA structures from forming. Promotes peptidyl transferase center (PTC) maturation. In Bordetella parapertussis (strain 12822 / ATCC BAA-587 / NCTC 13253), this protein is Dual-action ribosomal maturation protein DarP.